Reading from the N-terminus, the 378-residue chain is TelA-like protein SAB1262 (378 aa).

The protein belongs to the TelA family.

The protein is TelA-like protein SAB1262 of Staphylococcus aureus (strain bovine RF122 / ET3-1).